The primary structure comprises 387 residues: MPESLMVIRSSSTLRKHWEWMTFSADSVSSVHTLTDDLPLESLADQPGAGNVHLLIPPEGLLYRSLTLPNAKYKLTAQTLQWLAEETLPDNTQDWHWTVVDKQNESVEVIGIQSEKLSRYLERLHTAGLNVTRVLPDGCYLPWEVDSWTLVNQQTSWLIRSAAHAFNELDEHWLQHLAAQFPPENMLCYGVVPHGVAAANPLIQHPEIPSLSLYSADIAFQRYDMLHGIFRKQKTVSKSGKWLARLAVSCLVLAILSFVGSRSIALWHTLKIEDQLQQQQQETWQRYFPQIKRTHNFRFYFKQQLAQQYPEAVPLLYHLQTLLLEHPELQLMEANYSQKQKSLTLKMSAKSEANIDRFCELTQSWLPMEKTEKDPVSGVWTVRNSGK.

Residues 1–241 (MPESLMVIRS…KQKTVSKSGK (241 aa)) are Cytoplasmic-facing. Residues 242–260 (WLARLAVSCLVLAILSFVG) traverse the membrane as a helical segment. Topologically, residues 261–387 (SRSIALWHTL…GVWTVRNSGK (127 aa)) are periplasmic.

The protein belongs to the GSP L family. As to quaternary structure, type II secretion system is composed of four main components: the outer membrane complex, the inner membrane complex, the cytoplasmic secretion ATPase and the periplasm-spanning pseudopilus. Forms homodimers. Interacts with GspM. Interacts with GspE and GspF.

It is found in the cell inner membrane. Functionally, inner membrane component of the type II secretion system required for the energy-dependent secretion of extracellular factors such as proteases and toxins from the periplasm. Plays a role in the complex assembly and recruits GspM resulting in a stable complex in the inner membrane. Provides thus a link between the energy-providing GspE protein in the cytoplasm and the rest of the T2SS machinery. This chain is Putative type II secretion system protein L (gspL), found in Escherichia coli (strain K12).